The chain runs to 763 residues: Phosphoglycerol transferase I (763 aa).

4 helical membrane-spanning segments follow: residues 1–21 (MSELLSVALFLASVLIYAWKA), 26–46 (WWFAATLTVLGLFVILNITLY), 77–97 (ILPGIGIALALVAVFGALGWI), and 108–128 (VGYSLLALLLALGSVDASPAF).

This sequence belongs to the OpgB family.

It localises to the cell inner membrane. The enzyme catalyses a phosphatidylglycerol + a membrane-derived-oligosaccharide D-glucose = a 1,2-diacyl-sn-glycerol + a membrane-derived-oligosaccharide 6-(glycerophospho)-D-glucose.. It participates in glycan metabolism; osmoregulated periplasmic glucan (OPG) biosynthesis. In terms of biological role, transfers a phosphoglycerol residue from phosphatidylglycerol to the membrane-bound nascent glucan backbones. This is Phosphoglycerol transferase I from Salmonella newport (strain SL254).